We begin with the raw amino-acid sequence, 203 residues long: Adenosylcobalamin/alpha-ribazole phosphatase (203 aa).

The active-site Tele-phosphohistidine intermediate is His8. The active-site Proton donor/acceptor is Glu81.

Belongs to the phosphoglycerate mutase family.

It carries out the reaction adenosylcob(III)alamin 5'-phosphate + H2O = adenosylcob(III)alamin + phosphate. It catalyses the reaction alpha-ribazole 5'-phosphate + H2O = alpha-ribazole + phosphate. It participates in nucleoside biosynthesis; alpha-ribazole biosynthesis; alpha-ribazole from 5,6-dimethylbenzimidazole: step 2/2. Its function is as follows. Catalyzes the conversion of adenosylcobalamin 5'-phosphate to adenosylcobalamin (vitamin B12); involved in the assembly of the nucleotide loop of cobalamin. Also catalyzes the hydrolysis of the phospho group from alpha-ribazole 5'-phosphate to form alpha-ribazole. The chain is Adenosylcobalamin/alpha-ribazole phosphatase (cobC) from Escherichia coli (strain K12).